Reading from the N-terminus, the 248-residue chain is N-acylneuraminate-9-phosphatase (248 aa).

Asp-12 lines the Mg(2+) pocket. Residues Leu-13, Asp-14, Thr-131, Asn-132, and Lys-164 each coordinate phosphate. Residue Asp-14 coordinates Mg(2+). Residue Asp-189 coordinates Mg(2+).

Belongs to the HAD-like hydrolase superfamily. NANP family. It depends on Mg(2+) as a cofactor.

It carries out the reaction N-acetylneuraminate 9-phosphate + H2O = N-acetylneuraminate + phosphate. The enzyme catalyses N-glycoloylneuraminate 9-phosphate + H2O = N-glycoloylneuraminate + phosphate. It participates in amino-sugar metabolism; N-acetylneuraminate biosynthesis. With respect to regulation, inhibited by calcium. Inhibited by vanadate, sodium orthovanadate and phosphonate. Functionally, catalyzes the dephosphorylation of N-acylneuraminate 9-phosphate (Neu5Ac-9-P) to N-acetylneuraminic acid (Neu5Ac or sialic acid). Can also use N-glycoloylneuraminate 9-phosphate as substrate. The chain is N-acylneuraminate-9-phosphatase from Homo sapiens (Human).